We begin with the raw amino-acid sequence, 237 residues long: Leucyl/phenylalanyl-tRNA--protein transferase (237 aa).

This sequence belongs to the L/F-transferase family.

The protein localises to the cytoplasm. The catalysed reaction is N-terminal L-lysyl-[protein] + L-leucyl-tRNA(Leu) = N-terminal L-leucyl-L-lysyl-[protein] + tRNA(Leu) + H(+). It carries out the reaction N-terminal L-arginyl-[protein] + L-leucyl-tRNA(Leu) = N-terminal L-leucyl-L-arginyl-[protein] + tRNA(Leu) + H(+). The enzyme catalyses L-phenylalanyl-tRNA(Phe) + an N-terminal L-alpha-aminoacyl-[protein] = an N-terminal L-phenylalanyl-L-alpha-aminoacyl-[protein] + tRNA(Phe). In terms of biological role, functions in the N-end rule pathway of protein degradation where it conjugates Leu, Phe and, less efficiently, Met from aminoacyl-tRNAs to the N-termini of proteins containing an N-terminal arginine or lysine. The protein is Leucyl/phenylalanyl-tRNA--protein transferase of Aromatoleum aromaticum (strain DSM 19018 / LMG 30748 / EbN1) (Azoarcus sp. (strain EbN1)).